The following is a 485-amino-acid chain: Noelin (485 aa).

Residues 1–16 (MSVPLLKIGVVLSTMA) form the signal peptide. 8 N-linked (GlcNAc...) asparagine glycosylation sites follow: Asn33, Asn103, Asn187, Asn288, Asn307, Asn394, Asn431, and Asn473. Residues 87–227 (RDARTKQLRQ…LRACMQKLAC (141 aa)) adopt a coiled-coil conformation. In terms of domain architecture, Olfactomedin-like spans 226–478 (ACGKLTGISD…QTLYNVTLFH (253 aa)). A disulfide bridge connects residues Cys227 and Cys409. Residues 482-485 (SDEL) carry the Endoplasmic reticulum retention signal motif.

In terms of assembly, homotetramer; disulfide-linked. Dimer of dimers, giving rise to a V-shaped homotretramer. Isoform 1 and isoform 3 interact with RTN4R. Identified in a complex with RTN4R and LINGO1. Peripherally associated with AMPAR complex. AMPAR complex consists of an inner core made of 4 pore-forming GluA/GRIA proteins (GRIA1, GRIA2, GRIA3 and GRIA4) and 4 major auxiliary subunits arranged in a twofold symmetry. One of the two pairs of distinct binding sites is occupied either by CNIH2, CNIH3 or CACNG2, CACNG3. The other harbors CACNG2, CACNG3, CACNG4, CACNG8 or GSG1L. This inner core of AMPAR complex is complemented by outer core constituents binding directly to the GluA/GRIA proteins at sites distinct from the interaction sites of the inner core constituents. Outer core constituents include at least PRRT1, PRRT2, CKAMP44/SHISA9, FRRS1L and NRN1. The proteins of the inner and outer core serve as a platform for other, more peripherally associated AMPAR constituents, including OLFM1. Alone or in combination, these auxiliary subunits control the gating and pharmacology of the AMPAR complex and profoundly impact their biogenesis and protein processing. Interacts with OLFM2. Interacts with DTNB. In terms of tissue distribution, expressed in the brain cortex, olfactory bulb and vomeronasal neuroepithelium (at protein level). Detected in brain cortex, hippocampus, dorsal root ganglion and olfactory bulb.

The protein resides in the secreted. The protein localises to the synapse. It localises to the endoplasmic reticulum. Its subcellular location is the cell projection. It is found in the axon. The protein resides in the perikaryon. Contributes to the regulation of axonal growth in the embryonic and adult central nervous system by inhibiting interactions between RTN4R and LINGO1. Inhibits RTN4R-mediated axon growth cone collapse. May play an important role in regulating the production of neural crest cells by the neural tube. May be required for normal responses to olfactory stimuli. In Mus musculus (Mouse), this protein is Noelin (Olfm1).